A 183-amino-acid chain; its full sequence is Potassium-transporting ATPase KdpC subunit (183 aa).

Residues 11–31 (LALLMTLLTGVLYPLAVTGVA) form a helical membrane-spanning segment.

The protein belongs to the KdpC family. In terms of assembly, the system is composed of three essential subunits: KdpA, KdpB and KdpC.

It is found in the cell inner membrane. Its function is as follows. Part of the high-affinity ATP-driven potassium transport (or Kdp) system, which catalyzes the hydrolysis of ATP coupled with the electrogenic transport of potassium into the cytoplasm. This subunit acts as a catalytic chaperone that increases the ATP-binding affinity of the ATP-hydrolyzing subunit KdpB by the formation of a transient KdpB/KdpC/ATP ternary complex. The polypeptide is Potassium-transporting ATPase KdpC subunit (Pseudomonas putida (strain GB-1)).